Reading from the N-terminus, the 287-residue chain is Shikimate dehydrogenase (NADP(+)) (287 aa).

Residues 20–22 (SRS) and T67 each bind shikimate. The active-site Proton acceptor is the K71. An NADP(+)-binding site is contributed by E84. Positions 93 and 108 each coordinate shikimate. NADP(+)-binding positions include 132 to 136 (GAGGA), 156 to 161 (NRTAAR), and M226. Shikimate is bound at residue Y228. G250 is an NADP(+) binding site.

This sequence belongs to the shikimate dehydrogenase family. Homodimer.

The catalysed reaction is shikimate + NADP(+) = 3-dehydroshikimate + NADPH + H(+). It functions in the pathway metabolic intermediate biosynthesis; chorismate biosynthesis; chorismate from D-erythrose 4-phosphate and phosphoenolpyruvate: step 4/7. Involved in the biosynthesis of the chorismate, which leads to the biosynthesis of aromatic amino acids. Catalyzes the reversible NADPH linked reduction of 3-dehydroshikimate (DHSA) to yield shikimate (SA). The polypeptide is Shikimate dehydrogenase (NADP(+)) (Bordetella pertussis (strain Tohama I / ATCC BAA-589 / NCTC 13251)).